We begin with the raw amino-acid sequence, 116 residues long: Large ribosomal subunit protein bL19 (116 aa).

The protein belongs to the bacterial ribosomal protein bL19 family.

This protein is located at the 30S-50S ribosomal subunit interface and may play a role in the structure and function of the aminoacyl-tRNA binding site. The sequence is that of Large ribosomal subunit protein bL19 from Pseudomonas savastanoi pv. phaseolicola (strain 1448A / Race 6) (Pseudomonas syringae pv. phaseolicola (strain 1448A / Race 6)).